The following is a 487-amino-acid chain: Bifunctional cytokinin biosynthesis protein (487 aa).

Residues 1 to 266 (MESTNRFMIG…RMASDFCYAS (266 aa)) form an adenylate isopentenyltransferase region. The cytokinin riboside 5'-monophosphate phosphoribohydrolase stretch occupies residues 267-487 (TSISFHPINE…FSRKGELEWV (221 aa)). Substrate contacts are provided by residues Glu352, 380–381 (RK), 403–409 (GYGTLEE), and Thr415.

This sequence in the N-terminal section; belongs to the IPP transferase family. It in the C-terminal section; belongs to the LOG family.

It catalyses the reaction dimethylallyl diphosphate + AMP = N(6)-(dimethylallyl)adenosine 5'-phosphate + diphosphate. The catalysed reaction is N(6)-(dimethylallyl)adenosine 5'-phosphate + H2O = N(6)-dimethylallyladenine + D-ribose 5-phosphate. The enzyme catalyses 9-ribosyl-trans-zeatin 5'-phosphate + H2O = trans-zeatin + D-ribose 5-phosphate. It participates in secondary metabolite biosynthesis. Its function is as follows. Bifunctional cytokinin synthesis protein; part of the gene cluster that mediates the biosynthesis of cytokinins such as fusatin, fusatinic acids or 8-oxofusatin, known for their growth promoting and anti-senescence activities toward host plants. FCK1 is a bifunctional enzyme that performs the first steps in the biosynthesis of Fusarium cytokinins. It first condenses adenosine monophosphate (AMP) with dimethylallyl diphosphate (DMAPP) to yield isoprenyl adenosine monophosphate. It then catalyzes the removal of the phosphoribose to produce isopentenylaldehyde. The cytochrome P450 monooxygenase then converts isopentenylaldehyde to trans-zeatin. A condensation step converts trans-zeatin to fusatin which is further modified to produce fusatinic acid. The mechanism for oxidation of fusatin to fusatinic acid remains unknown. 8-oxofusatin could be produced through several pathways, via direct oxygenation of fusatin, or via the 8-oxo-pentenyladenine intermediate which itself must arise from either the prenylation of 8-oxo-AMP by FCK1 and/or oxygenation of isopentenylaldehyde. Both the FCK3 and FCK4 enzymes act downstream of the identified cytokinins to produce yet unidentified compounds. This Fusarium pseudograminearum (strain CS3096) (Wheat and barley crown-rot fungus) protein is Bifunctional cytokinin biosynthesis protein.